A 191-amino-acid polypeptide reads, in one-letter code: Probable DNA-directed RNA polymerase subunit delta (191 aa).

In terms of domain architecture, HTH HARE-type spans 14 to 83; the sequence is LSMIEVARAI…GENKWGLRSW (70 aa). Residues 118–191 form a disordered region; sequence DEDAIDYRDD…EDEEDEEPVL (74 aa).

This sequence belongs to the RpoE family. As to quaternary structure, RNAP is composed of a core of 2 alpha, a beta and a beta' subunits. The core is associated with a delta subunit and one of several sigma factors.

Participates in both the initiation and recycling phases of transcription. In the presence of the delta subunit, RNAP displays an increased specificity of transcription, a decreased affinity for nucleic acids, and an increased efficiency of RNA synthesis because of enhanced recycling. The chain is Probable DNA-directed RNA polymerase subunit delta from Streptococcus pyogenes serotype M18 (strain MGAS8232).